A 187-amino-acid polypeptide reads, in one-letter code: uncharacterized protein (187 aa).

Residues 42–63 are disordered; the sequence is RTNGPGKDSFSFSTSGSKPSSS. Positions 50–63 are enriched in low complexity; sequence SFSFSTSGSKPSSS.

This is an uncharacterized protein from Saccharomyces cerevisiae (strain ATCC 204508 / S288c) (Baker's yeast).